A 190-amino-acid chain; its full sequence is Pyridoxal 5'-phosphate synthase subunit PdxT (190 aa).

46 to 48 contacts L-glutamine; sequence GES. Cys78 acts as the Nucleophile in catalysis. L-glutamine is bound by residues Arg106 and 135–136; that span reads IR. Catalysis depends on charge relay system residues His171 and Glu173.

This sequence belongs to the glutaminase PdxT/SNO family. In terms of assembly, in the presence of PdxS, forms a dodecamer of heterodimers. Only shows activity in the heterodimer.

It carries out the reaction aldehydo-D-ribose 5-phosphate + D-glyceraldehyde 3-phosphate + L-glutamine = pyridoxal 5'-phosphate + L-glutamate + phosphate + 3 H2O + H(+). The enzyme catalyses L-glutamine + H2O = L-glutamate + NH4(+). It functions in the pathway cofactor biosynthesis; pyridoxal 5'-phosphate biosynthesis. Functionally, catalyzes the hydrolysis of glutamine to glutamate and ammonia as part of the biosynthesis of pyridoxal 5'-phosphate. The resulting ammonia molecule is channeled to the active site of PdxS. This Dictyoglomus turgidum (strain DSM 6724 / Z-1310) protein is Pyridoxal 5'-phosphate synthase subunit PdxT.